The primary structure comprises 376 residues: Queuine tRNA-ribosyltransferase (376 aa).

Asp-93 functions as the Proton acceptor in the catalytic mechanism. Substrate contacts are provided by residues 93–97 (DSGGF), Asp-147, Gln-191, and Gly-218. The interval 249–255 (GVGKPED) is RNA binding. The active-site Nucleophile is the Asp-268. Residues 273 to 277 (TRNAR) form an RNA binding; important for wobble base 34 recognition region. The Zn(2+) site is built by Cys-306, Cys-308, Cys-311, and His-337.

Belongs to the queuine tRNA-ribosyltransferase family. In terms of assembly, homodimer. Within each dimer, one monomer is responsible for RNA recognition and catalysis, while the other monomer binds to the replacement base PreQ1. Zn(2+) is required as a cofactor.

The catalysed reaction is 7-aminomethyl-7-carbaguanine + guanosine(34) in tRNA = 7-aminomethyl-7-carbaguanosine(34) in tRNA + guanine. Its pathway is tRNA modification; tRNA-queuosine biosynthesis. Its function is as follows. Catalyzes the base-exchange of a guanine (G) residue with the queuine precursor 7-aminomethyl-7-deazaguanine (PreQ1) at position 34 (anticodon wobble position) in tRNAs with GU(N) anticodons (tRNA-Asp, -Asn, -His and -Tyr). Catalysis occurs through a double-displacement mechanism. The nucleophile active site attacks the C1' of nucleotide 34 to detach the guanine base from the RNA, forming a covalent enzyme-RNA intermediate. The proton acceptor active site deprotonates the incoming PreQ1, allowing a nucleophilic attack on the C1' of the ribose to form the product. After dissociation, two additional enzymatic reactions on the tRNA convert PreQ1 to queuine (Q), resulting in the hypermodified nucleoside queuosine (7-(((4,5-cis-dihydroxy-2-cyclopenten-1-yl)amino)methyl)-7-deazaguanosine). This chain is Queuine tRNA-ribosyltransferase, found in Histophilus somni (strain 129Pt) (Haemophilus somnus).